Here is a 185-residue protein sequence, read N- to C-terminus: MAVMPDKWIREKAENFGMIEPFVNHKSSKGVISFGLSSYGYDARVDNKFKIFTNVNSAIVDPKNFSENSFIDKETDVCIIPPNSFVLASTVEYFRIPRNVLVICVGKSTYARCGIIVNVTPLEPGWEGHVTLEFSNTTPLPAKIYANEGACQFVFLSGESECEKSYDDMKGKYMNQHGITLPLVK.

DCTP is bound by residues 107 to 112 (KSTYAR), 131 to 133 (TLE), Q152, Y166, and Q176. Catalysis depends on E133, which acts as the Proton donor/acceptor.

The protein belongs to the dCTP deaminase family. As to quaternary structure, homotrimer.

It carries out the reaction dCTP + H2O + H(+) = dUTP + NH4(+). It functions in the pathway pyrimidine metabolism; dUMP biosynthesis; dUMP from dCTP (dUTP route): step 1/2. Functionally, catalyzes the deamination of dCTP to dUTP. In Wolbachia pipientis wMel, this protein is dCTP deaminase.